The following is a 171-amino-acid chain: Methylated-DNA--protein-cysteine methyltransferase (171 aa).

The active-site Nucleophile; methyl group acceptor is the cysteine 139.

The protein belongs to the MGMT family.

It localises to the cytoplasm. It catalyses the reaction a 6-O-methyl-2'-deoxyguanosine in DNA + L-cysteinyl-[protein] = S-methyl-L-cysteinyl-[protein] + a 2'-deoxyguanosine in DNA. The enzyme catalyses a 4-O-methyl-thymidine in DNA + L-cysteinyl-[protein] = a thymidine in DNA + S-methyl-L-cysteinyl-[protein]. Functionally, involved in the cellular defense against the biological effects of O6-methylguanine (O6-MeG) and O4-methylthymine (O4-MeT) in DNA. Repairs the methylated nucleobase in DNA by stoichiometrically transferring the methyl group to a cysteine residue in the enzyme. This is a suicide reaction: the enzyme is irreversibly inactivated. This is Methylated-DNA--protein-cysteine methyltransferase from Shigella flexneri.